A 156-amino-acid chain; its full sequence is Cyanate hydratase (156 aa).

Active-site residues include Arg-96, Glu-99, and Ser-122.

This sequence belongs to the cyanase family.

The enzyme catalyses cyanate + hydrogencarbonate + 3 H(+) = NH4(+) + 2 CO2. In terms of biological role, catalyzes the reaction of cyanate with bicarbonate to produce ammonia and carbon dioxide. This is Cyanate hydratase from Escherichia coli O9:H4 (strain HS).